Consider the following 430-residue polypeptide: Adenylosuccinate synthetase (430 aa).

Residues 12–18 and 40–42 contribute to the GTP site; these read GDEGKGK and GHT. Aspartate 13 serves as the catalytic Proton acceptor. 2 residues coordinate Mg(2+): aspartate 13 and glycine 40. Residues 13-16, 38-41, threonine 128, arginine 142, glutamine 223, threonine 238, and arginine 302 contribute to the IMP site; these read DEGK and NAGH. The active-site Proton donor is the histidine 41. 298–304 is a binding site for substrate; sequence TTTGRPR. GTP is bound by residues arginine 304, 330–332, and 412–414; these read SID and SVG.

The protein belongs to the adenylosuccinate synthetase family. As to quaternary structure, homodimer. It depends on Mg(2+) as a cofactor.

It is found in the cytoplasm. The catalysed reaction is IMP + L-aspartate + GTP = N(6)-(1,2-dicarboxyethyl)-AMP + GDP + phosphate + 2 H(+). It functions in the pathway purine metabolism; AMP biosynthesis via de novo pathway; AMP from IMP: step 1/2. In terms of biological role, plays an important role in the de novo pathway of purine nucleotide biosynthesis. Catalyzes the first committed step in the biosynthesis of AMP from IMP. This is Adenylosuccinate synthetase from Streptococcus pyogenes serotype M1.